Consider the following 953-residue polypeptide: Ribonuclease E (953 aa).

Disordered regions lie at residues 1–23 (MIDG…PDRL) and 118–314 (VAPQ…RRRP). Over residues 14 to 23 (SQHEELPDRL) the composition is skewed to basic and acidic residues. The span at 127-150 (LADDEDVDDGPDYVADDSDADDEG) shows a compositional bias: acidic residues. Over residues 157–169 (NRRRRRGRRGRGR) the composition is skewed to basic residues. Residues 183–193 (DQQSEPRAQQF) are compositionally biased toward polar residues. A compositionally biased stretch (acidic residues) spans 199–223 (AETDDGDDRDSEDTEAGDNGEDENG). The segment covering 230 to 240 (RRRRRRRRRKS) has biased composition (basic residues). Basic and acidic residues-rich tracts occupy residues 263–272 (VHERVPRAGD) and 294–311 (TRLE…DAGR). Positions 376-453 (GNIYLGIVQN…GHKGARLTTQ (78 aa)) constitute an S1 motif domain. Aspartate 647 and aspartate 691 together coordinate Mg(2+). Positions 749 and 752 each coordinate Zn(2+). Disordered regions lie at residues 766–808 (SAAA…APGE) and 822–953 (LAGR…IRLD). Residues 848 to 915 (DLDDTAQADF…DADVDEEDAA (68 aa)) are compositionally biased toward acidic residues.

It belongs to the RNase E/G family. In terms of assembly, assembles into a homotetramer formed by a dimer of dimers. Interacts with DNA-binding protein HU (hupB). Requires Mg(2+) as cofactor. Zn(2+) is required as a cofactor.

The protein resides in the cytoplasm. It catalyses the reaction Endonucleolytic cleavage of single-stranded RNA in A- and U-rich regions.. Its function is as follows. Endoribonuclease that plays a central role in RNA processing and decay. Plays a major role in pre-16S rRNA maturation, probably generating the mature 5'-end, and a minor role in pre-5S and pre-23S rRNA maturation. Probably also processes tRNA. RNase E and HupB jointly contribute to cellular adaptation to changing growth conditions and survival during antibiotic treatment and in the host. The polypeptide is Ribonuclease E (Mycobacterium tuberculosis (strain ATCC 25618 / H37Rv)).